We begin with the raw amino-acid sequence, 490 residues long: Probable cytochrome P450 308a1 (490 aa).

Cys431 is a binding site for heme.

This sequence belongs to the cytochrome P450 family. Requires heme as cofactor.

It localises to the endoplasmic reticulum membrane. It is found in the microsome membrane. Its function is as follows. May be involved in the metabolism of insect hormones and in the breakdown of synthetic insecticides. The chain is Probable cytochrome P450 308a1 (Cyp308a1) from Drosophila melanogaster (Fruit fly).